A 369-amino-acid polypeptide reads, in one-letter code: Type 2 DNA topoisomerase 6 subunit A (369 aa).

In terms of domain architecture, Topo IIA-type catalytic spans 11–149; that stretch reads KGDALAREKL…FHMRPEEDGA (139 aa). Y106 (O-(5'-phospho-DNA)-tyrosine intermediate) is an active-site residue. Mg(2+) contacts are provided by E202 and D254.

The protein belongs to the TOP6A family. As to quaternary structure, homodimer. Heterotetramer of two Top6A and two Top6B chains. The cofactor is Mg(2+).

The enzyme catalyses ATP-dependent breakage, passage and rejoining of double-stranded DNA.. In terms of biological role, relaxes both positive and negative superturns and exhibits a strong decatenase activity. In Methanosarcina mazei (strain ATCC BAA-159 / DSM 3647 / Goe1 / Go1 / JCM 11833 / OCM 88) (Methanosarcina frisia), this protein is Type 2 DNA topoisomerase 6 subunit A.